Consider the following 426-residue polypeptide: Adenylosuccinate synthetase (426 aa).

GTP is bound by residues 12 to 18 (GDEGKGK) and 40 to 42 (GHT). The active-site Proton acceptor is Asp-13. Mg(2+) contacts are provided by Asp-13 and Gly-40. Residues 13 to 16 (DEGK), 38 to 41 (NAGH), Thr-130, Arg-144, Gln-224, Thr-239, and Arg-303 each bind IMP. Residue His-41 is the Proton donor of the active site. 299–305 (TVTNRVR) is a substrate binding site. GTP is bound by residues Arg-305, 331 to 333 (KLD), and 413 to 415 (STG).

This sequence belongs to the adenylosuccinate synthetase family. As to quaternary structure, homodimer. The cofactor is Mg(2+).

It localises to the cytoplasm. It catalyses the reaction IMP + L-aspartate + GTP = N(6)-(1,2-dicarboxyethyl)-AMP + GDP + phosphate + 2 H(+). It participates in purine metabolism; AMP biosynthesis via de novo pathway; AMP from IMP: step 1/2. Functionally, plays an important role in the de novo pathway of purine nucleotide biosynthesis. Catalyzes the first committed step in the biosynthesis of AMP from IMP. The polypeptide is Adenylosuccinate synthetase (Anaplasma marginale (strain St. Maries)).